Reading from the N-terminus, the 261-residue chain is NAD-capped RNA hydrolase NudC (261 aa).

Substrate contacts are provided by K25 and R69. Zn(2+) contacts are provided by C98 and C101. Residue E111 participates in substrate binding. C116 and C119 together coordinate Zn(2+). Substrate is bound at residue Y124. One can recognise a Nudix hydrolase domain in the interval 125–248 (PQIAPCVIVA…TVARRLIEDT (124 aa)). A divalent metal cation is bound by residues A158, E174, and E178. The short motif at 159 to 180 (GFVEVGETLEQAVSREVLEESN) is the Nudix box element. 192 to 199 (QPWPFPHS) lines the substrate pocket. E219 contributes to the a divalent metal cation binding site. Substrate is bound at residue A241.

The protein belongs to the Nudix hydrolase family. NudC subfamily. As to quaternary structure, homodimer. Requires Mg(2+) as cofactor. Mn(2+) is required as a cofactor. Zn(2+) serves as cofactor.

It carries out the reaction a 5'-end NAD(+)-phospho-ribonucleoside in mRNA + H2O = a 5'-end phospho-adenosine-phospho-ribonucleoside in mRNA + beta-nicotinamide D-ribonucleotide + 2 H(+). It catalyses the reaction NAD(+) + H2O = beta-nicotinamide D-ribonucleotide + AMP + 2 H(+). The enzyme catalyses NADH + H2O = reduced beta-nicotinamide D-ribonucleotide + AMP + 2 H(+). Functionally, mRNA decapping enzyme that specifically removes the nicotinamide adenine dinucleotide (NAD) cap from a subset of mRNAs by hydrolyzing the diphosphate linkage to produce nicotinamide mononucleotide (NMN) and 5' monophosphate mRNA. The NAD-cap is present at the 5'-end of some mRNAs and stabilizes RNA against 5'-processing. Has preference for mRNAs with a 5'-end purine. Catalyzes the hydrolysis of a broad range of dinucleotide pyrophosphates. The polypeptide is NAD-capped RNA hydrolase NudC (Yersinia enterocolitica serotype O:8 / biotype 1B (strain NCTC 13174 / 8081)).